Here is an 862-residue protein sequence, read N- to C-terminus: Cadherin-related family member 5 (862 aa).

The signal sequence occupies residues 1–28 (MGAPALLWPPLLLPLLTVLFGHLPGTLA). At 29 to 671 (QAQVCSANQT…GQRFSTVDMA (643 aa)) the chain is on the extracellular side. N-linked (GlcNAc...) asparagine glycans are attached at residues Asn36, Asn45, Asn135, Asn173, Asn201, Asn311, Asn408, Asn438, and Asn479. 4 consecutive Cadherin domains span residues 40–127 (FTMN…APEF), 128–240 (PFTI…TPWF), 252–357 (IQAQ…PLQF), and 358–462 (SQSL…PPST). Residues 452-658 (IQVSEREPPS…TTGPISGVGE (207 aa)) form a disordered region. Positions 461–500 (STESPTPPEAGGTTGPSSNTTLETPSTSGTSQGPATTSSG) are enriched in low complexity. Residues 529–652 (LGISTSPQTA…GTSQPTTTGP (124 aa)) show a composition bias toward polar residues. Tandem repeats lie at residues 545–575 (TQTPKPGTSQPMVPTPGASTSSQPATPSGSS), 576–606 (TQTPKPGTSQPMVPTPGASTSSQPATPSGSS), and 607–636 (TQTPRPGTSQPMVPTPGASTSSQPATPSGS). Positions 545 to 648 (TQTPKPGTSQ…TPKPGTSQPT (104 aa)) are 4 X 31 AA approximate tandem repeats. The 4; truncated repeat unit spans residues 637 to 648 (TQTPKPGTSQPT). The chain crosses the membrane as a helical span at residues 672 to 692 (VLGGVLGALLLLALIFLIILI). Over 693–862 (HKHYRHRFTC…LGAVADNTYV (170 aa)) the chain is Cytoplasmic. A mediates interaction with USH1C and MYO7B and is required for proper localization to microvilli tips and function in microvilli organization region spans residues 693–862 (HKHYRHRFTC…LGAVADNTYV (170 aa)). 2 disordered regions span residues 706-803 (KAKE…EGGY) and 821-862 (LNEP…NTYV). Phosphoserine is present on residues Ser729, Ser751, and Ser755. Positions 739–768 (GPEPVQPPLRPPSPMSSSPTPPSSMPPSPQ) are enriched in pro residues. A Phosphothreonine modification is found at Thr758. Ser766 and Ser783 each carry phosphoserine. Positions 791–801 (LTKERRPEGEG) are enriched in basic and acidic residues. Residue Thr825 is modified to Phosphothreonine. Residues 827-837 (DVDSASASGSE) are compositionally biased toward low complexity. Residues Ser832, Ser834, and Ser836 each carry the phosphoserine modification.

As to quaternary structure, part of the IMAC/intermicrovillar adhesion complex/intermicrovillar tip-link complex composed of ANKS4B, MYO7B, USH1C, CDHR2 and CDHR5. Interacts (via cytoplasmic domain) with USH1C and MYO7B; required for proper localization of CDHR5 to microvilli tips and its function in brush border differentiation. In terms of processing, N- and O-glycosylated. Expressed predominantly in kidney. Also detected in lung and small intestine.

The protein localises to the apical cell membrane. Its subcellular location is the cell projection. It is found in the microvillus membrane. Intermicrovillar adhesion molecule that forms, via its extracellular domain, calcium-dependent heterophilic complexes with CDHR2 on adjacent microvilli. Thereby, controls the packing of microvilli at the apical membrane of epithelial cells. Through its cytoplasmic domain, interacts with microvillus cytoplasmic proteins to form the intermicrovillar adhesion complex/IMAC. This complex plays a central role in microvilli and epithelial brush border differentiation. This Rattus norvegicus (Rat) protein is Cadherin-related family member 5.